The sequence spans 366 residues: Alanine racemase (366 aa).

K40 (proton acceptor; specific for D-alanine) is an active-site residue. Residue K40 is modified to N6-(pyridoxal phosphate)lysine. R136 contacts substrate. Y263 acts as the Proton acceptor; specific for L-alanine in catalysis. M310 provides a ligand contact to substrate.

Belongs to the alanine racemase family. The cofactor is pyridoxal 5'-phosphate.

The catalysed reaction is L-alanine = D-alanine. The protein operates within amino-acid biosynthesis; D-alanine biosynthesis; D-alanine from L-alanine: step 1/1. In terms of biological role, catalyzes the interconversion of L-alanine and D-alanine. May also act on other amino acids. The sequence is that of Alanine racemase (alr) from Streptococcus pyogenes serotype M2 (strain MGAS10270).